Reading from the N-terminus, the 212-residue chain is Adenylate kinase (212 aa).

10–15 (GAGKGT) contacts ATP. Positions 30–59 (STGDMFRAAMANQTEMGVLAKSYIDKGELV) are NMP. AMP contacts are provided by residues Thr-31, Arg-36, 57-59 (ELV), 86-89 (GYPR), and Gln-93. An LID region spans residues 127 to 159 (GRIIHRVTGETFHKVFNPPVDYKEEDYYQREDD). ATP-binding positions include Arg-128 and 137–138 (TF). AMP is bound by residues Arg-156 and Arg-167. Position 195 (Gln-195) interacts with ATP.

The protein belongs to the adenylate kinase family. Monomer.

The protein resides in the cytoplasm. The catalysed reaction is AMP + ATP = 2 ADP. It functions in the pathway purine metabolism; AMP biosynthesis via salvage pathway; AMP from ADP: step 1/1. Its function is as follows. Catalyzes the reversible transfer of the terminal phosphate group between ATP and AMP. Plays an important role in cellular energy homeostasis and in adenine nucleotide metabolism. This is Adenylate kinase from Streptococcus pneumoniae serotype 4 (strain ATCC BAA-334 / TIGR4).